The sequence spans 196 residues: Lipoprotein signal peptidase (196 aa).

The next 2 helical transmembrane spans lie at 75 to 95 and 97 to 117; these read IVFL…MMSS and TIGG…NLID. Residues D126 and D144 contribute to the active site. A helical transmembrane segment spans residues 135-155; sequence YSFPVFNLADCFITLGVIILV.

The protein belongs to the peptidase A8 family.

The protein localises to the cell inner membrane. It carries out the reaction Release of signal peptides from bacterial membrane prolipoproteins. Hydrolyzes -Xaa-Yaa-Zaa-|-(S,diacylglyceryl)Cys-, in which Xaa is hydrophobic (preferably Leu), and Yaa (Ala or Ser) and Zaa (Gly or Ala) have small, neutral side chains.. The protein operates within protein modification; lipoprotein biosynthesis (signal peptide cleavage). In terms of biological role, this protein specifically catalyzes the removal of signal peptides from prolipoproteins. In Rickettsia bellii (strain OSU 85-389), this protein is Lipoprotein signal peptidase.